The primary structure comprises 549 residues: Cytoplasmic trehalase (549 aa).

Residues Arg-168, 175–176, Asn-212, 221–223, 292–294, and Gly-324 contribute to the substrate site; these read WD, RSQ, and RDE. Active-site proton donor/acceptor residues include Asp-326 and Glu-509. Glu-525 provides a ligand contact to substrate.

Belongs to the glycosyl hydrolase 37 family. As to quaternary structure, monomer.

The protein localises to the cytoplasm. The enzyme catalyses alpha,alpha-trehalose + H2O = alpha-D-glucose + beta-D-glucose. The protein operates within glycan degradation; trehalose degradation; D-glucose from alpha,alpha-trehalose: step 1/1. Its function is as follows. Hydrolyzes trehalose to glucose. Could be involved, in cells returning to low osmolarity conditions, in the utilization of the accumulated cytoplasmic trehalose, which was synthesized in response to high osmolarity. In Shigella boydii serotype 4 (strain Sb227), this protein is Cytoplasmic trehalase.